Consider the following 662-residue polypeptide: MQLDEDLEFAKKIFNPNRAFAKQARIKNMCEYKDLVHEANEDYEHFWGELAKQKLTWFKPFDKVLNSDNAPFFKWFENGKINVSYNCIDRHLKDKKNKVAIIFEGEMGDYNVITYRKLHSEVNKTANLLKNEFNVKKGDRVIIYMPMIVESVYMMLACARIGAIHSIVFAGFSPEALRDRINDAQAKLVITADGTFRKGKPYMLKPALDKALENNACPSVEKALIVIRNAREIDYVRGRDFVYNEMVNYQSDKCEPEMMDSEDPLFLLYTSGSTGKPKGVQHSSAGYLLWAQMTMEWVFDIRDNDNFWCTADIGWITGHTYVVYGPLACGATTLILEGTMSYPDYGRWWRMIEEYRVDKFYTSPTAIRMLHAKGENEPLKYNLESLKVLGTVGEPINPTAWKWFYEKIGNSKCSIVDTWWQTETGGHIISPLPGATPIRASCATLPLPGIHAEVLNEDGTKTKPGEQGFLCITKPWPSMVRNIWGDEKRYIDSYFSQIKLNGEYVYLSGDGAIVDENGYITIIGRTDDIVNVSGHRIGTAEVESAISKHEMVVECAVVGIPDTIKGEGLFAFVVLCDGAKCNLGESLELLKEMNHILSVEIGKIAKLDNVMYVPGLPKTRSGKIMRRLLKSIAKKEPITQDLSTLEDVNVVKEIMSIVQMEE.

CoA is bound by residues 197–200 (RKGK) and threonine 317. ATP is bound by residues 393 to 395 (GEP), 417 to 422 (DTWWQT), aspartate 510, and arginine 525. Serine 533 serves as a coordination point for CoA. Arginine 536 is a binding site for ATP. Mg(2+) is bound by residues histidine 549 and valine 552. Residue lysine 623 is modified to N6-acetyllysine.

This sequence belongs to the ATP-dependent AMP-binding enzyme family. Mg(2+) serves as cofactor. Acetylated. Deacetylation by the SIR2-homolog deacetylase activates the enzyme.

It catalyses the reaction acetate + ATP + CoA = acetyl-CoA + AMP + diphosphate. In terms of biological role, catalyzes the conversion of acetate into acetyl-CoA (AcCoA), an essential intermediate at the junction of anabolic and catabolic pathways. AcsA undergoes a two-step reaction. In the first half reaction, AcsA combines acetate with ATP to form acetyl-adenylate (AcAMP) intermediate. In the second half reaction, it can then transfer the acetyl group from AcAMP to the sulfhydryl group of CoA, forming the product AcCoA. The chain is Acetyl-coenzyme A synthetase from Helicobacter pylori (strain P12).